We begin with the raw amino-acid sequence, 483 residues long: 6-phosphogluconate dehydrogenase, decarboxylating (483 aa).

NADP(+) is bound by residues 10-15 and 33-35; these read GLAVMG and NRT. Position 38 is an N6-acetyllysine (lysine 38). Residue serine 57 is modified to Phosphoserine. Residues 75–77 and asparagine 103 each bind NADP(+); that span reads VKA. Substrate-binding residues include asparagine 103, serine 129, and glycine 131. Residue serine 129 is modified to Phosphoserine. Residue lysine 184 is the Proton acceptor of the active site. 187–188 serves as a coordination point for substrate; it reads HN. Glutamate 191 (proton donor) is an active-site residue. 5 residues coordinate substrate: tyrosine 192, lysine 261, arginine 288, arginine 447, and histidine 453. NADP(+) is bound at residue 478–481; sequence SSSY.

It belongs to the 6-phosphogluconate dehydrogenase family. Homodimer.

It localises to the cytoplasm. The catalysed reaction is 6-phospho-D-gluconate + NADP(+) = D-ribulose 5-phosphate + CO2 + NADPH. Its pathway is carbohydrate degradation; pentose phosphate pathway; D-ribulose 5-phosphate from D-glucose 6-phosphate (oxidative stage): step 3/3. Its function is as follows. Catalyzes the oxidative decarboxylation of 6-phosphogluconate to ribulose 5-phosphate and CO(2), with concomitant reduction of NADP to NADPH. This chain is 6-phosphogluconate dehydrogenase, decarboxylating (PGD), found in Ovis aries (Sheep).